Consider the following 117-residue polypeptide: Gamma-aminobutyric acid receptor-associated protein-like 1 (117 aa).

Gly-116 is lipidated: Phosphatidylethanolamine amidated glycine; alternate. A lipid anchor (Phosphatidylserine amidated glycine; alternate) is attached at Gly-116. Lys-117 is a propeptide (removed in mature form).

Belongs to the ATG8 family. In terms of assembly, interacts with ATG13, OPRK1, RB1CC1 and ULK1. Interacts with TP53INP1 and TP53INP2. Directly interacts with SQSTM1. Interacts with ATG3, ATG7 and MAP15. Interacts with TECPR2. Interacts with TBC1D5. Interacts with MAPK15. Interacts with TRIM5. Interacts with MEFV and TRIM21. Interacts with WDFY3. Interacts with the reticulophagy receptor TEX264. Interacts with UBA5. Interacts with KBTBD6 and KBTBD7; the interaction is direct. Interacts with reticulophagy regulators RETREG1, RETREG2 and RETREG3. Interacts with IRGM. Interacts with DNM2. Interacts with NCOA4 (via C-terminus). In terms of processing, the precursor molecule is cleaved by ATG4 (ATG4A, ATG4B, ATG4C or ATG4D) to expose the glycine at the C-terminus and form the cytosolic form, GABARAPL1-I. The processed form is then activated by APG7L/ATG7, transferred to ATG3 and conjugated to phosphatidylethanolamine (PE) phospholipid to form the membrane-bound form, GABARAPL1-II. During non-canonical autophagy, the processed form is conjugated to phosphatidylserine (PS) phospholipid. ATG4 proteins also mediate the delipidation of PE-conjugated forms required for GABARAPL1 recycling when autophagosomes fuse with lysosomes. In addition, ATG4B and ATG4D mediate delipidation of ATG8 proteins conjugated to PS during non-canonical autophagy. ATG4B constitutes the major protein for proteolytic activation. ATG4D is the main enzyme for delipidation activity.

The protein resides in the cytoplasmic vesicle. It localises to the autophagosome. The protein localises to the cytoplasmic vesicle membrane. It is found in the cytoplasm. Its subcellular location is the cytoskeleton. The protein resides in the endoplasmic reticulum. It localises to the golgi apparatus. In terms of biological role, ubiquitin-like modifier that increases cell-surface expression of kappa-type opioid receptor through facilitating anterograde intracellular trafficking of the receptor. Involved in formation of autophagosomal vacuoles. While LC3s are involved in elongation of the phagophore membrane, the GABARAP/GATE-16 subfamily is essential for a later stage in autophagosome maturation. Through its interaction with the reticulophagy receptor TEX264, participates in the remodeling of subdomains of the endoplasmic reticulum into autophagosomes upon nutrient stress, which then fuse with lysosomes for endoplasmic reticulum turnover. The sequence is that of Gamma-aminobutyric acid receptor-associated protein-like 1 from Pongo abelii (Sumatran orangutan).